The sequence spans 224 residues: Ribose-5-phosphate isomerase A (224 aa).

Residues 26-29 (TGST), 81-84 (DGAD), and 94-97 (KGGG) contribute to the substrate site. Glu-103 functions as the Proton acceptor in the catalytic mechanism. Lys-121 is a binding site for substrate.

Belongs to the ribose 5-phosphate isomerase family. Homodimer.

The enzyme catalyses aldehydo-D-ribose 5-phosphate = D-ribulose 5-phosphate. Its pathway is carbohydrate degradation; pentose phosphate pathway; D-ribose 5-phosphate from D-ribulose 5-phosphate (non-oxidative stage): step 1/1. Functionally, catalyzes the reversible conversion of ribose-5-phosphate to ribulose 5-phosphate. This is Ribose-5-phosphate isomerase A from Listeria monocytogenes serovar 1/2a (strain ATCC BAA-679 / EGD-e).